A 77-amino-acid chain; its full sequence is Large ribosomal subunit protein uL29 (77 aa).

Belongs to the universal ribosomal protein uL29 family.

The sequence is that of Large ribosomal subunit protein uL29 from Mycobacterium avium (strain 104).